We begin with the raw amino-acid sequence, 467 residues long: Cytochrome P450 monooxygenase azaI (467 aa).

Residues 1 to 28 (MESLAQLPGIFLPLAGCVLALSLSALLA) form the signal peptide. Cys411 provides a ligand contact to heme.

The protein belongs to the cytochrome P450 family. The cofactor is heme.

It participates in secondary metabolite biosynthesis. In terms of biological role, cytochrome P450 monooxygenase; part of the gene cluster that mediates the biosynthesis of azaphilones, a class of fungal metabolites characterized by a highly oxygenated pyrano-quinone bicyclic core and exhibiting a broad range of bioactivities. In the first step, the non-reducing polyketide synthase azaA forms the hexaketide precursor from successive condensations of five malonyl-CoA units, presumably with a simple acetyl-CoA starter unit. The reactive polyketide chain then undergoes a PT-mediated C2-C7 cyclization to afford the aromatic ring and is eventually released as an aldehyde through the R-domain. The putative ketoreductase azaE is proposed to catalyze the reduction of the terminal ketone resulting in the early culture product FK17-P2a. The monooxygenase azaH was demonstrated to be the only enzyme required to convert FK17-P2a to azanigerone E. AzaH first hydroxylates the benzaldehyde intermediate FK17-P2a at C4, which triggers the formation of the pyran-ring to afford azanigerone E. In parallel, the 2,4-dimethylhexanoyl chain is synthesized by the HR-PKS azaB and is proposed to be transferred to the C4-hydroxyl of azanigerone E by the acyltransferase azaD directly from the ACP domain of azaB. Alternatively, the 2,4-dimethyl-hexanoyl chain may be offloaded from the HR-PKS as a carboxylic acid and converted to an acyl-CoA by azaF. The resulting acyl-CoA molecule could then be taken up as a substrate by AzaD to form azanigerone B. To yield the carboxylic acid substituent in azanigerone A, the hydroxypropyl side chain of azanigerone B would need to undergo a C-C oxidative cleavage catalyzed by cytochrome P450 AzaI. AzaI is proposed to act on a vicinal diol that leads to a C-C bond scission either through an alkoxyradical intermediate or a peroxy complex. In the biosynthesis of azanigerone A, azanigerone B first undergoes hydroxylation at C10, possibly catalyzed by one of the two FAD-dependent monooxygenases encoded in the cluster, azaG or azaL, resulting in the vicinal diol azanigerone C. Oxidative cleavage of azanigerone C by azaI would yield the corresponding aldehyde derivative of azanigerone A. Finally, the dehydrogenase azaJ is proposed to convert the aldehyde functional group into the carboxylic acid, completing the conversion from azanigerone B to azanigerone A. Alternatively, the oxidation of aldehyde to carboxylic acid may be catalyzed by the same P450 enzyme azaI via consecutive oxidation or by endogenous alcohol dehydrogenase. This is Cytochrome P450 monooxygenase azaI from Aspergillus niger (strain ATCC 1015 / CBS 113.46 / FGSC A1144 / LSHB Ac4 / NCTC 3858a / NRRL 328 / USDA 3528.7).